A 399-amino-acid polypeptide reads, in one-letter code: Protein DDI1 homolog 2 (399 aa).

The Ubiquitin-like domain maps to 1 to 81 (MLLTVYCVRR…VILRQKENAD (81 aa)). Positions 99 to 134 (IAVPGTSSPRQRQPPGTQQSHSSPGEITSSPQGLDN) are disordered. The segment covering 103–131 (GTSSPRQRQPPGTQQSHSSPGEITSSPQG) has biased composition (polar residues). Thr-104 is subject to Phosphothreonine. Ser-106, Ser-121, Ser-128, Ser-150, and Ser-194 each carry phosphoserine. The active site involves Asp-252. The Ubiquitin-binding motif lies at 376 to 395 (EEIADQELAEALQKSAEDAE).

Belongs to the DDI1 family. In terms of assembly, homodimer. Interacts with MCM6; PCNA; PSMD4; PSMD8; RPA2 and RPN2. Interacts with RTF2.

It localises to the cytoplasm. The protein localises to the cytosol. Its subcellular location is the chromosome. In terms of biological role, aspartic protease that mediates the cleavage of NFE2L1/NRF1 at 'Leu-104', thereby promoting release of NFE2L1/NRF1 from the endoplasmic reticulum membrane. Ubiquitination of NFE2L1/NRF1 is a prerequisite for cleavage, suggesting that DDI2 specifically recognizes and binds ubiquitinated NFE2L1/NRF1. Seems to act as a proteasomal shuttle which links the proteasome and replication fork proteins like RTF2. Required, with DDI1, for cellular survival following replication stress. Together or redudantly with DDI1, removes RTF2 from stalled forks to allow cell cycle progression after replication stress and maintains genome integrity. The protein is Protein DDI1 homolog 2 of Homo sapiens (Human).